A 263-amino-acid chain; its full sequence is Complement C1q tumor necrosis factor-related protein 6 (263 aa).

A signal peptide spans 1 to 24 (MRVIMGTASLGSIWAVFLLPLVFG). The N-linked (GlcNAc...) asparagine glycan is linked to Asn76. Residues 80 to 123 (LKGDKGDRGPSGTPGKPGKNGTRGDRGSQGIKGDKGQAGSPGSS) are disordered. Positions 82-123 (GDKGDRGPSGTPGKPGKNGTRGDRGSQGIKGDKGQAGSPGSS) constitute a Collagen-like domain. The C1q domain maps to 124 to 263 (CQTHYSAFSV…SGHLIKAEDN (140 aa)).

Its subcellular location is the secreted. The protein is Complement C1q tumor necrosis factor-related protein 6 (C1qtnf6) of Rattus norvegicus (Rat).